The primary structure comprises 936 residues: DNA replication licensing factor MCM2 (936 aa).

Disordered regions lie at residues 1–105 (MAGE…GQAM) and 126–190 (KLPH…EDDN). A compositionally biased stretch (low complexity) spans 10–19 (PSSPASPSSA). Residues 20–36 (GFNTDQLPISTSQNSEN) show a composition bias toward polar residues. Composition is skewed to acidic residues over residues 53–69 (EPDE…EDLF) and 180–190 (QTDDYQDEDDN). The C4-type zinc-finger motif lies at 355-381 (CNKCGAVLGPFFQNSYSEVKVGSCSEC). Residues 499–705 (IVERIIKSIA…VTDEMLAEFV (207 aa)) form the MCM domain. Residue 549–556 (GDPGTAKS) participates in ATP binding. The Arginine finger motif lies at 681–684 (SRFD). Residues 711-739 (KSQPKGGKMEDSDPEDGIQGSSGSTDPEV) are disordered.

The protein belongs to the MCM family. Component of the minichromosome maintenance (MCM) complex, a heterotetramer composed of MCM2, MCM3, MCM4, MCM5, MCM6 and MCM7. Interacts with ETG1 and the replication-associated protein of the geminivirus mungbean yellow mosaic virus (MYMV). As to expression, expressed in root apical meristem, lateral root meristem primordia, leaf primordia, shoot apical meristem and flower buds.

The protein resides in the nucleus. It catalyses the reaction ATP + H2O = ADP + phosphate + H(+). Probable component of the MCM2-7 complex (MCM complex) that may function as a DNA helicase and which is essential to undergo a single round of replication initiation and elongation per cell cycle in eukaryotic cells. May play a crucial role in the control of de-differentiation and cell proliferation processes required for lateral root formation. Is essential for embryo development. Is involved in the geminivirus mungbean yellow mosaic virus (MYMV) DNA replication, presumably in conjunction with other host factors. The protein is DNA replication licensing factor MCM2 (MCM2) of Arabidopsis thaliana (Mouse-ear cress).